We begin with the raw amino-acid sequence, 146 residues long: Actin-depolymerizing factor 6 (146 aa).

Serine 13 is modified (phosphoserine). The 133-residue stretch at glycine 14 to asparagine 146 folds into the ADF-H domain.

This sequence belongs to the actin-binding proteins ADF family. Phosphorylated. In terms of tissue distribution, expressed in vascular tissues of all organs.

Its subcellular location is the cytoplasm. It localises to the cytoskeleton. Its function is as follows. Actin-depolymerizing protein. Severs actin filaments (F-actin) and binds to actin monomers. This Arabidopsis thaliana (Mouse-ear cress) protein is Actin-depolymerizing factor 6 (ADF6).